We begin with the raw amino-acid sequence, 602 residues long: MSKIIGIDLGTTNSCIAVLSNGKPQVIENSEGGRTTPSVVGYTEDNRIIVGLPAKRQAITNPKNTLYAIKRLIGRKFKDDIVQKDIKMVPYKIISSENGDAWVEVKDKKLAPPQISAEILKKMKITAENFLNEKVTKAVITVPAYFNDSQRQATKDAGKIAGLEVLRIINEPTAAALAYGLDKKKNDRIIAVYDLGGGTFDISIIEIANVDGETQFEVLSTNGDTFLGGEDFDIRIINNLIYEFKIENGINLSGDSLAMQRLKEAAEKAKIELSSVEQTDINLPYITADKNGPKHLNIKITRSKLESLVEDLILKSLKPCEIALNDAKISKNKIDEIILVGGQTRMPLVQKMVSDFFEKVVKKDINPDEAVAIGASVQAGVLSGVVKDVLLLDVTPLTLGIETMGGIMTPLIEKNTTIPTKKTQVFSTAEDNQTSVTIHTLQGERKKALQNKSLGKFDLNNISPAPRGVPQIEVSFDLDANGILNVTAKDKKTGVEQSIVIKSSGGLSELEIENMIKDAEANLEIDKKFEELVKCRNEADSTISIVKKKLKDENLKILDEERVSIEKSISNLELLIKGDDIDSIKKENEELLKLSDNIIKKK.

Thr-199 is subject to Phosphothreonine; by autocatalysis.

Belongs to the heat shock protein 70 family.

Functionally, acts as a chaperone. In Carsonella ruddii (strain PV), this protein is Chaperone protein DnaK.